Reading from the N-terminus, the 345-residue chain is S-adenosylmethionine:tRNA ribosyltransferase-isomerase (345 aa).

Belongs to the QueA family. Monomer.

Its subcellular location is the cytoplasm. It catalyses the reaction 7-aminomethyl-7-carbaguanosine(34) in tRNA + S-adenosyl-L-methionine = epoxyqueuosine(34) in tRNA + adenine + L-methionine + 2 H(+). Its pathway is tRNA modification; tRNA-queuosine biosynthesis. Transfers and isomerizes the ribose moiety from AdoMet to the 7-aminomethyl group of 7-deazaguanine (preQ1-tRNA) to give epoxyqueuosine (oQ-tRNA). In Acinetobacter baumannii (strain AB0057), this protein is S-adenosylmethionine:tRNA ribosyltransferase-isomerase.